A 118-amino-acid polypeptide reads, in one-letter code: NADH dehydrogenase [ubiquinone] iron-sulfur protein 5-A (118 aa).

The CHCH domain maps to 46 to 87 (KGRCYDFWMDFSECMSHCREPKDCTLLREDYLECLHHSKEFQ). 2 consecutive short sequence motifs (cx9C motif) follow at residues 49–59 (CYDFWMDFSEC) and 69–79 (CTLLREDYLEC). 2 disulfide bridges follow: Cys49–Cys79 and Cys59–Cys69. Positions 98–118 (RKLRAASRKGEEAGDGTHNHH) are disordered.

This sequence belongs to the complex I NDUFS5 subunit family. Complex I is composed of at least 49 different subunits. This is a component of the iron-sulfur (IP) fragment of the enzyme.

The protein localises to the mitochondrion. The protein resides in the mitochondrion inner membrane. Its subcellular location is the mitochondrion intermembrane space. Functionally, accessory subunit of the mitochondrial membrane respiratory chain NADH dehydrogenase (Complex I), that is believed not to be involved in catalysis. Complex I functions in the transfer of electrons from NADH to the respiratory chain. The immediate electron acceptor for the enzyme is believed to be ubiquinone. The chain is NADH dehydrogenase [ubiquinone] iron-sulfur protein 5-A from Arabidopsis thaliana (Mouse-ear cress).